Here is an 89-residue protein sequence, read N- to C-terminus: Large ribosomal subunit protein bL27 (89 aa).

The interval 1–21 (MAHKKAGGSSRNGRDSESKRL) is disordered.

The protein belongs to the bacterial ribosomal protein bL27 family.

The chain is Large ribosomal subunit protein bL27 from Brucella anthropi (strain ATCC 49188 / DSM 6882 / CCUG 24695 / JCM 21032 / LMG 3331 / NBRC 15819 / NCTC 12168 / Alc 37) (Ochrobactrum anthropi).